The sequence spans 115 residues: Replication initiation control protein YabA (115 aa).

Positions 90, 92, 106, and 109 each coordinate Zn(2+).

It belongs to the YabA family. As to quaternary structure, homotetramer. Interacts with both DnaA and DnaN, acting as a bridge between these two proteins. Requires Zn(2+) as cofactor.

It localises to the cytoplasm. Its subcellular location is the nucleoid. In terms of biological role, involved in control of chromosome replication initiation. Inhibits the cooperative binding of DnaA to the oriC region, thus negatively regulating initiation of chromosome replication. Inhibits the ability of DnaA-ATP to form a helix on DNA; does not disassemble preformed DnaA-DNA helices. Decreases the residence time of DnaA on the chromosome at its binding sites (oriC, replication forks and promoter-binding sites). Tethers DnaA to the replication machinery via the DNA polymerase beta sliding clamp subunit (dnaN). Associates with oriC and other DnaA targets on the chromosome in a DnaA-dependent manner. The protein is Replication initiation control protein YabA of Staphylococcus epidermidis (strain ATCC 35984 / DSM 28319 / BCRC 17069 / CCUG 31568 / BM 3577 / RP62A).